The sequence spans 238 residues: Probable transcriptional regulatory protein CF0838 (238 aa).

The protein belongs to the TACO1 family.

It localises to the cytoplasm. The protein is Probable transcriptional regulatory protein CF0838 of Chlamydia felis (strain Fe/C-56) (Chlamydophila felis).